The chain runs to 465 residues: Cysteine--tRNA ligase (465 aa).

C30 is a Zn(2+) binding site. The 'HIGH' region signature appears at 32-42 (ITVYDYCHIGH). Zn(2+) is bound by residues C214, H239, and E243. A 'KMSKS' region motif is present at residues 271–275 (KMSKS). K274 lines the ATP pocket.

It belongs to the class-I aminoacyl-tRNA synthetase family. As to quaternary structure, monomer. It depends on Zn(2+) as a cofactor.

Its subcellular location is the cytoplasm. It catalyses the reaction tRNA(Cys) + L-cysteine + ATP = L-cysteinyl-tRNA(Cys) + AMP + diphosphate. This chain is Cysteine--tRNA ligase, found in Burkholderia mallei (strain NCTC 10229).